A 451-amino-acid polypeptide reads, in one-letter code: tRNA-2-methylthio-N(6)-dimethylallyladenosine synthase (451 aa).

The region spanning 18-134 (ARVYLETYGC…LPNLLDLAES (117 aa)) is the MTTase N-terminal domain. Positions 27, 63, 97, 170, 174, and 177 each coordinate [4Fe-4S] cluster. One can recognise a Radical SAM core domain in the interval 156–386 (RKNGHSAFLA…IALQQKISAE (231 aa)). One can recognise a TRAM domain in the interval 389-451 (RNDIGNTHEV…TSATLIGNAL (63 aa)).

It belongs to the methylthiotransferase family. MiaB subfamily. In terms of assembly, monomer. It depends on [4Fe-4S] cluster as a cofactor.

The protein resides in the cytoplasm. It carries out the reaction N(6)-dimethylallyladenosine(37) in tRNA + (sulfur carrier)-SH + AH2 + 2 S-adenosyl-L-methionine = 2-methylsulfanyl-N(6)-dimethylallyladenosine(37) in tRNA + (sulfur carrier)-H + 5'-deoxyadenosine + L-methionine + A + S-adenosyl-L-homocysteine + 2 H(+). Its function is as follows. Catalyzes the methylthiolation of N6-(dimethylallyl)adenosine (i(6)A), leading to the formation of 2-methylthio-N6-(dimethylallyl)adenosine (ms(2)i(6)A) at position 37 in tRNAs that read codons beginning with uridine. In Chloroherpeton thalassium (strain ATCC 35110 / GB-78), this protein is tRNA-2-methylthio-N(6)-dimethylallyladenosine synthase.